We begin with the raw amino-acid sequence, 720 residues long: Cyclopenase penL (720 aa).

Cu cation is bound by residues H137, H141, and H313.

The protein belongs to the tyrosinase family. Requires Cu(2+) as cofactor.

It catalyses the reaction (-)-cyclopenine = viridicatin + methyl isocyanate + H(+). The enzyme catalyses (-)-4'-methoxycyclopenine = 4'-methoxyviridicatin + methyl isocyanate + H(+). The protein operates within secondary metabolite biosynthesis. It participates in alkaloid biosynthesis. Its pathway is mycotoxin biosynthesis. Functionally, cyclopenase; part of the gene cluster that mediates the biosynthesis of penigequinolones, potent insecticidal alkaloids that contain a highly modified 10-carbon prenyl group. The first stage is catalyzed by the nonribosomal peptide synthetase penN that condenses anthranilic acid and O-methyl-L-tyrosine to produce 4'-methoxycyclopeptin. 4'-methoxycyclopeptin is then converted to 4'-methoxydehydrocyclopeptin by the ketoglutarate-dependent dioxygenase penM through dehydrogenation to form a double bond between C-alpha and C-beta of the O-methyltyrosine side chain. PenM also converts its first product methoxydehydrocyclopeptin to 4'-methoxycyclopenin. The following conversion of 4'methoxycyclopenin into 4'-methoxyviridicatin is catalyzed by the cyclopenase penL. 4'-methoxyviridicatin is the precursor of quinolone natural products, and is further converted to quinolinone B. The prenyltransferase penI then catalyzes the canonical Friedel-Crafts alkylation of quinolinone B with dimethylallyl cation to yield dimethylallyl quinolone, which is subjected to FAD-dependent dehydrogenation by the FAD-linked oxidoreductase penH to yield conjugated aryl diene. The delta(3') double bond then serves as the site of the second alkylation with DMAPP catalyzed by the prenyltransferase penG to yield a carbenium ion intermediate, which can be attacked by H(2)O to yield a styrenyl quinolone containing a C3'-hydroxyprenyl chain, or undergo cyclization to yield yaequinolones J1 and J2. The conversion of the styrenyl quinolone into the tetrahydrofuran-containing yaequinolone C is performed by the FAD-dependent monooxygenase penE and involves epoxidation of the terminal C7'-C8' olefin, followed by epoxide ring opening initiated by the C3' hydroxyl group. The predicted cysteine hydrolase penJ acts as an epoxide hydrolase that enhances the rate of the 5-exo-tet cyclization step, increasing the yield of yaequinolone C. PenF catalyzes the cationic rearrangement of the epoxide formed by penE (before ring opening to produce yaequinolone C) into yaequinolone D. Finally, the short-chain dehydrogenase/reductase (SDR)-like reductase penD, catalyzes both the dehydration of yaequinolone D and the reduction of the resulting oxonium to yield penigequinolone. The polypeptide is Cyclopenase penL (Penicillium thymicola).